The primary structure comprises 554 residues: Bifunctional epoxide hydrolase 2 (554 aa).

A phosphatase region spans residues 1–224; the sequence is MALRVAAFDL…KVTGTQFPEA (224 aa). Residues Asp9 and Asp11 each contribute to the Mg(2+) site. Lys55 carries the post-translational modification N6-succinyllysine. A phosphate-binding site is contributed by 123-124; sequence TN. Residue Lys176 is modified to N6-acetyllysine; alternate. Lys176 bears the N6-succinyllysine; alternate mark. Asp185 is a binding site for Mg(2+). An N6-acetyllysine mark is found at Lys191 and Lys215. An epoxide hydrolase region spans residues 233–554; the sequence is NDVSHGYVTV…IQNPSVTSKI (322 aa). One can recognise an AB hydrolase-1 domain in the interval 257–530; sequence PAICLCHGFP…CGHWTQIEKP (274 aa). Asp333 serves as the catalytic Nucleophile. Position 368 is a phosphoserine (Ser368). A substrate-binding site is contributed by Tyr381. N6-succinyllysine is present on residues Lys420 and Lys454. Residue Tyr465 is the Proton donor of the active site. Residue Lys504 is modified to N6-succinyllysine. Cys521 carries the S-(15-deoxy-Delta12,14-prostaglandin J2-9-yl)cysteine lipid modification. His523 acts as the Proton acceptor in catalysis. The Microbody targeting signal motif lies at 552 to 554; sequence SKI. Residue Lys553 is modified to N6-succinyllysine.

This sequence belongs to the AB hydrolase superfamily. Epoxide hydrolase family. In terms of assembly, homodimer. Requires Mg(2+) as cofactor. Post-translationally, the covalent modification of cysteine by 15-deoxy-Delta12,14-prostaglandin-J2 is autocatalytic and reversible. It may occur as an alternative to other cysteine modifications, such as S-nitrosylation and S-palmitoylation.

The protein localises to the cytoplasm. It is found in the peroxisome. The enzyme catalyses an epoxide + H2O = an ethanediol. It carries out the reaction (9S,10S)-10-hydroxy-9-(phosphooxy)octadecanoate + H2O = (9S,10S)-9,10-dihydroxyoctadecanoate + phosphate. The catalysed reaction is 8-hydroxy-(11S,12S)-epoxy-(5Z,9E,14Z)-eicosatrienoate + H2O = (8,11R,12S)-trihydroxy-(5Z,9E,14Z)-eicosatrienoate. It catalyses the reaction 10-hydroxy-(11S,12S)-epoxy- (5Z,8Z,14Z)-eicosatrienoate + H2O = (10,11S,12R)-trihydroxy-(5Z,8Z,14Z)-eicosatrienoate. The enzyme catalyses 12-phosphooxy-(9Z)-octadecenoate + H2O = 12-hydroxy-(9Z)-octadecenoate + phosphate. It carries out the reaction 12-phosphooxy-(9E)-octadecenoate + H2O = 12-hydroxy-(9E)-octadecenoate + phosphate. The catalysed reaction is 12-(phosphooxy)octadecanoate + H2O = 12-hydroxyoctadecanoate + phosphate. It catalyses the reaction 8,9-epoxy-(5Z,11Z,14Z)-eicosatrienoate + H2O = 8,9-dihydroxy-(5Z,11Z,14Z)-eicosatrienoate. The enzyme catalyses 11,12-epoxy-(5Z,8Z,14Z)-eicosatrienoate + H2O = 11,12-dihydroxy-(5Z,8Z,14Z)-eicosatrienoate. It carries out the reaction 14,15-epoxy-(5Z,8Z,11Z)-eicosatrienoate + H2O = 14,15-dihydroxy-(5Z,8Z,11Z)-eicosatrienoate. The catalysed reaction is 9,10-epoxy-(12Z)-octadecenoate + H2O = 9,10-dihydroxy-(12Z)-octadecenoate. It catalyses the reaction 1-tetradecanoyl-sn-glycerol 3-phosphate + H2O = 1-tetradecanoyl-sn-glycerol + phosphate. The enzyme catalyses 1-octadecanoyl-sn-glycero-3-phosphate + H2O = 1-octadecanoyl-sn-glycerol + phosphate. It carries out the reaction 1-(5Z,8Z,11Z,14Z-eicosatetraenoyl)-sn-glycero-3-phosphate + H2O = 1-(5Z,8Z,11Z,14Z-eicosatetraenoyl)-sn-glycerol + phosphate. The catalysed reaction is 1-hexadecanoyl-sn-glycero-3-phosphate + H2O = 1-hexadecanoyl-sn-glycerol + phosphate. It catalyses the reaction 1-(9Z-octadecenoyl)-sn-glycero-3-phosphate + H2O = 1-(9Z-octadecenoyl)-sn-glycerol + phosphate. The enzyme catalyses (8S,9R)-epoxy-(5Z,11Z,14Z)-eicosatrienoate + H2O = (8S,9S)-dihydroxy-(5Z,11Z,14Z)-eicosatrienoate. It carries out the reaction (11S,12R)-epoxy-(5Z,8Z,14Z)-eicosatrienoate + H2O = (11R,12R)-dihydroxy-(5Z,8Z,14Z)-eicosatrienoate. The catalysed reaction is (11S,12R)-epoxy-(5Z,8Z,14Z)-eicosatrienoate + H2O = (11S,12S)-dihydroxy-(5Z,8Z,14Z)-eicosatrienoate. It catalyses the reaction (14S,15R)-epoxy-(5Z,8Z,11Z)-eicosatrienoate + H2O = (14R,15R)-dihydroxy-(5Z,8Z,11Z)-eicosatrienoate. The enzyme catalyses (14S,15R)-epoxy-(5Z,8Z,11Z)-eicosatrienoate + H2O = (14S,15S)-dihydroxy-(5Z,8Z,11Z)-eicosatrienoate. It carries out the reaction (11R,12S)-epoxy-(5Z,8Z,14Z)-eicosatrienoate + H2O = (11S,12S)-dihydroxy-(5Z,8Z,14Z)-eicosatrienoate. The catalysed reaction is (11R,12S)-epoxy-(5Z,8Z,14Z)-eicosatrienoate + H2O = (11R,12R)-dihydroxy-(5Z,8Z,14Z)-eicosatrienoate. It catalyses the reaction (8S,9R)-epoxy-(5Z,11Z,14Z)-eicosatrienoate + H2O = (8R,9R)-dihydroxy-(5Z,11Z,14Z)-eicosatrienoate. The enzyme catalyses (14R,15S)-epoxy-(5Z,8Z,11Z)-eicosatrienoate + H2O = (14R,15R)-dihydroxy-(5Z,8Z,11Z)-eicosatrienoate. With respect to regulation, inhibited by 1-(1-acetylpiperidin-4-yl)-3-(4-(trifl uoromethoxy)phenyl)urea (TPAU), 1-cyclohexyl-3-dodecylurea (CDU), 12-(3-adamantan-1-yl-ureido)-dodecanoic acid (AUDA), 1-((3S, 5S, 7S)-adamantan-1-yl)-3-(5-(2-(2-ethoxyethoxy) ethoxy)pentyl)urea (AEPU), N-adamantyl-N[']-cyclohexyl urea (ACU), 4-(((1S, 4S)-4-(3-((3S, 5S, 7S)-adamantan-1-yl) ureido)cyclohexyl)oxy)benzoic acid (c-AUCB), 4-(((1R, 4R)-4-(3-((3S, 5S, 7S)-adamantan-1-yl)ureido)cyclohexyl)oxy)benzoic acid (t-AUCB), 4-(((1R, 4R)-4-(3-(4(trifluoromethoxy)phenyl)ureido)cyclohexyl)oxy)benzoic acid (t-TAUCB) and to a lesser extent by 8-(3-((3S, 5S, 7S)-adamantan-1-yl)ureido) octanoic acid (AUOA). Phosphatase activity is inhibited by dodecyl-phosphate, phospholipids such as phospho-lysophosphatidic acids and fatty acids such as palmitic acid and lauric acid. Bifunctional enzyme. The C-terminal domain has epoxide hydrolase activity and acts on epoxides (alkene oxides, oxiranes) and arene oxides. Plays a role in xenobiotic metabolism by degrading potentially toxic epoxides. Also determines steady-state levels of physiological mediators. The N-terminal domain has lipid phosphatase activity, with the highest activity towards threo-9,10-phosphonooxy-hydroxy-octadecanoic acid, followed by erythro-9,10-phosphonooxy-hydroxy-octadecanoic acid, 12-phosphonooxy-octadec-9Z-enoic acid and 12-phosphonooxy-octadec-9E-enoic acid. Functionally, bifunctional enzyme. The C-terminal domain has epoxide hydrolase activity and acts on epoxides (alkene oxides, oxiranes) and arene oxides. Plays a role in xenobiotic metabolism by degrading potentially toxic epoxides. Also determines steady-state levels of physiological mediators. Its function is as follows. Bifunctional enzyme. The N-terminal domain has lipid phosphatase activity, with the highest activity towards threo-9,10-phosphonooxy-hydroxy-octadecanoic acid, followed by erythro-9,10-phosphonooxy-hydroxy-octadecanoic acid, 12-phosphonooxy-octadec-9Z-enoic acid and 12-phosphonooxy-octadec-9E-enoic acid. Has phosphatase activity toward lyso-glycerophospholipids with also some lower activity toward lysolipids of sphingolipid and isoprenoid phosphates. This Rattus norvegicus (Rat) protein is Bifunctional epoxide hydrolase 2.